Here is a 225-residue protein sequence, read N- to C-terminus: Enolase-phosphatase E1 (225 aa).

This sequence belongs to the HAD-like hydrolase superfamily. MasA/MtnC family. In terms of assembly, monomer. Mg(2+) serves as cofactor.

It catalyses the reaction 5-methylsulfanyl-2,3-dioxopentyl phosphate + H2O = 1,2-dihydroxy-5-(methylsulfanyl)pent-1-en-3-one + phosphate. Its pathway is amino-acid biosynthesis; L-methionine biosynthesis via salvage pathway; L-methionine from S-methyl-5-thio-alpha-D-ribose 1-phosphate: step 3/6. It functions in the pathway amino-acid biosynthesis; L-methionine biosynthesis via salvage pathway; L-methionine from S-methyl-5-thio-alpha-D-ribose 1-phosphate: step 4/6. Its function is as follows. Bifunctional enzyme that catalyzes the enolization of 2,3-diketo-5-methylthiopentyl-1-phosphate (DK-MTP-1-P) into the intermediate 2-hydroxy-3-keto-5-methylthiopentenyl-1-phosphate (HK-MTPenyl-1-P), which is then dephosphorylated to form the acireductone 1,2-dihydroxy-3-keto-5-methylthiopentene (DHK-MTPene). This Shewanella denitrificans (strain OS217 / ATCC BAA-1090 / DSM 15013) protein is Enolase-phosphatase E1.